Reading from the N-terminus, the 290-residue chain is Elongation factor Ts, mitochondrial 1 (290 aa).

This sequence belongs to the EF-Ts family.

It localises to the mitochondrion. Its function is as follows. Associates with the EF-Tu.GDP complex and induces the exchange of GDP to GTP. It remains bound to the aminoacyl-tRNA.EF-Tu.GTP complex up to the GTP hydrolysis stage on the ribosome. This chain is Elongation factor Ts, mitochondrial 1, found in Postia placenta (strain ATCC 44394 / Madison 698-R) (Brown rot fungus).